The primary structure comprises 395 residues: NAD(P)H-quinone oxidoreductase subunit H, chloroplastic (395 aa).

The protein belongs to the complex I 49 kDa subunit family. In terms of assembly, NDH is composed of at least 16 different subunits, 5 of which are encoded in the nucleus.

The protein localises to the plastid. Its subcellular location is the chloroplast thylakoid membrane. It carries out the reaction a plastoquinone + NADH + (n+1) H(+)(in) = a plastoquinol + NAD(+) + n H(+)(out). The catalysed reaction is a plastoquinone + NADPH + (n+1) H(+)(in) = a plastoquinol + NADP(+) + n H(+)(out). Its function is as follows. NDH shuttles electrons from NAD(P)H:plastoquinone, via FMN and iron-sulfur (Fe-S) centers, to quinones in the photosynthetic chain and possibly in a chloroplast respiratory chain. The immediate electron acceptor for the enzyme in this species is believed to be plastoquinone. Couples the redox reaction to proton translocation, and thus conserves the redox energy in a proton gradient. The polypeptide is NAD(P)H-quinone oxidoreductase subunit H, chloroplastic (Chloranthus spicatus (Chulantree)).